A 189-amino-acid polypeptide reads, in one-letter code: HGPRTase-like protein 1 (189 aa).

It belongs to the purine/pyrimidine phosphoribosyltransferase family. Archaeal HPRT subfamily.

In terms of biological role, may catalyze a purine salvage reaction, the substrate is unknown. The protein is HGPRTase-like protein 1 of Natrialba magadii (strain ATCC 43099 / DSM 3394 / CCM 3739 / CIP 104546 / IAM 13178 / JCM 8861 / NBRC 102185 / NCIMB 2190 / MS3) (Natronobacterium magadii).